The chain runs to 502 residues: Alpha-ketoglutarate-dependent dioxygenase FTO (502 aa).

The segment at 32 to 324 (TPKDDEFYQQ…SSTHRVAECS (293 aa)) is fe2OG dioxygenase domain. Arginine 96 and tyrosine 108 together coordinate substrate. Asparagine 202 contributes to the 2-oxoglutarate binding site. The loop L1; predicted to block binding of double-stranded DNA or RNA stretch occupies residues 210-221 (PYLKEEPYFGMG). At lysine 213 the chain carries N6-acetyllysine. Residues histidine 228 and aspartate 230 each contribute to the Fe cation site. Substrate is bound at residue 228 to 231 (HHDE). Residue tyrosine 292 participates in 2-oxoglutarate binding. Fe cation is bound at residue histidine 304. Residues 313–315 (RFS), threonine 317, and arginine 319 each bind 2-oxoglutarate.

This sequence belongs to the fto family. In terms of assembly, monomer. May also exist as homodimer. Fe(2+) is required as a cofactor. Ubiquitous. Detected in brain, brain cortex, hypothalamus, cerebellum, liver, pancreas, heart, kidney, white adipose tissue and skeletal muscle. Most abundant in the brain, particularly in hypothalamic nuclei governing energy balance.

The protein localises to the nucleus. Its subcellular location is the nucleus speckle. It localises to the cytoplasm. The catalysed reaction is a 5'-end (N(7)-methyl 5'-triphosphoguanosine)-(N(6),2'-O-dimethyladenosine) in mRNA + 2-oxoglutarate + O2 = a 5'-end (N(7)-methyl 5'-triphosphoguanosine)-(2'-O-methyladenosine) in mRNA + formaldehyde + succinate + CO2. The enzyme catalyses an N(6)-methyladenosine in mRNA + 2-oxoglutarate + O2 = an adenosine in mRNA + formaldehyde + succinate + CO2. It carries out the reaction N(6)-methyladenosine in U6 snRNA + 2-oxoglutarate + O2 = adenosine in U6 snRNA + formaldehyde + succinate + CO2. It catalyses the reaction a 5'-end (N(7)-methyl 5'-triphosphoguanosine)-(N(6),2'-O-dimethyladenosine) in U6 snRNA + 2-oxoglutarate + O2 = a 5'-end (N(7)-methyl 5'-triphosphoguanosine)-(2'-O-methyladenosine) in U6 snRNA + formaldehyde + succinate + CO2. The catalysed reaction is an N(1)-methyladenosine in tRNA + 2-oxoglutarate + O2 = an adenosine in tRNA + formaldehyde + succinate + CO2. Activated by ascorbate. Inhibited by N-oxalylglycine, fumarate and succinate. Its function is as follows. RNA demethylase that mediates oxidative demethylation of different RNA species, such as mRNAs, tRNAs and snRNAs, and acts as a regulator of fat mass, adipogenesis and energy homeostasis. Specifically demethylates N(6)-methyladenosine (m6A) RNA, the most prevalent internal modification of messenger RNA (mRNA) in higher eukaryotes. M6A demethylation by FTO affects mRNA expression and stability. Also able to demethylate m6A in U6 small nuclear RNA (snRNA). Mediates demethylation of N(6),2'-O-dimethyladenosine cap (m6A(m)), by demethylating the N(6)-methyladenosine at the second transcribed position of mRNAs and U6 snRNA. Demethylation of m6A(m) in the 5'-cap by FTO affects mRNA stability by promoting susceptibility to decapping. Also acts as a tRNA demethylase by removing N(1)-methyladenine from various tRNAs. Has no activity towards 1-methylguanine. Has no detectable activity towards double-stranded DNA. Also able to repair alkylated DNA and RNA by oxidative demethylation: demethylates single-stranded RNA containing 3-methyluracil, single-stranded DNA containing 3-methylthymine and has low demethylase activity towards single-stranded DNA containing 1-methyladenine or 3-methylcytosine. Ability to repair alkylated DNA and RNA is however unsure in vivo. Involved in the regulation of fat mass, adipogenesis and body weight, thereby contributing to the regulation of body size and body fat accumulation. Involved in the regulation of thermogenesis and the control of adipocyte differentiation into brown or white fat cells. Regulates activity of the dopaminergic midbrain circuitry via its ability to demethylate m6A in mRNAs. In Mus musculus (Mouse), this protein is Alpha-ketoglutarate-dependent dioxygenase FTO.